Consider the following 196-residue polypeptide: ATP-dependent Clp protease proteolytic subunit (196 aa).

S97 acts as the Nucleophile in catalysis. The active site involves H122.

Belongs to the peptidase S14 family. Fourteen ClpP subunits assemble into 2 heptameric rings which stack back to back to give a disk-like structure with a central cavity, resembling the structure of eukaryotic proteasomes.

Its subcellular location is the cytoplasm. The catalysed reaction is Hydrolysis of proteins to small peptides in the presence of ATP and magnesium. alpha-casein is the usual test substrate. In the absence of ATP, only oligopeptides shorter than five residues are hydrolyzed (such as succinyl-Leu-Tyr-|-NHMec, and Leu-Tyr-Leu-|-Tyr-Trp, in which cleavage of the -Tyr-|-Leu- and -Tyr-|-Trp bonds also occurs).. Cleaves peptides in various proteins in a process that requires ATP hydrolysis. Has a chymotrypsin-like activity. Plays a major role in the degradation of misfolded proteins. The chain is ATP-dependent Clp protease proteolytic subunit from Lacticaseibacillus paracasei (strain ATCC 334 / BCRC 17002 / CCUG 31169 / CIP 107868 / KCTC 3260 / NRRL B-441) (Lactobacillus paracasei).